A 202-amino-acid polypeptide reads, in one-letter code: ATP-dependent Clp protease proteolytic subunit (202 aa).

Ser101 functions as the Nucleophile in the catalytic mechanism. Residue His126 is part of the active site.

It belongs to the peptidase S14 family. As to quaternary structure, component of the chloroplastic Clp protease core complex.

It is found in the plastid. It localises to the chloroplast stroma. The enzyme catalyses Hydrolysis of proteins to small peptides in the presence of ATP and magnesium. alpha-casein is the usual test substrate. In the absence of ATP, only oligopeptides shorter than five residues are hydrolyzed (such as succinyl-Leu-Tyr-|-NHMec, and Leu-Tyr-Leu-|-Tyr-Trp, in which cleavage of the -Tyr-|-Leu- and -Tyr-|-Trp bonds also occurs).. Functionally, cleaves peptides in various proteins in a process that requires ATP hydrolysis. Has a chymotrypsin-like activity. Plays a major role in the degradation of misfolded proteins. The sequence is that of ATP-dependent Clp protease proteolytic subunit from Calycanthus floridus var. glaucus (Eastern sweetshrub).